The sequence spans 254 residues: Glutamate racemase (254 aa).

Substrate-binding positions include 7–8 and 39–40; these read DS and YG. Catalysis depends on Cys-70, which acts as the Proton donor/acceptor. Substrate contacts are provided by residues 71 to 72 and Glu-147; that span reads NT. Cys-178 functions as the Proton donor/acceptor in the catalytic mechanism. A substrate-binding site is contributed by 179–180; the sequence is TH.

This sequence belongs to the aspartate/glutamate racemases family. As to quaternary structure, homodimer.

The enzyme catalyses L-glutamate = D-glutamate. It functions in the pathway cell wall biogenesis; peptidoglycan biosynthesis. Provides the (R)-glutamate required for cell wall biosynthesis. Converts L- or D-glutamate to D- or L-glutamate, respectively, but not other amino acids such as alanine, aspartate, and glutamine. This chain is Glutamate racemase, found in Aquifex pyrophilus.